Reading from the N-terminus, the 98-residue chain is Acylphosphatase (98 aa).

The region spanning 12-98 (RLSAWVHGHV…DATMTGFSER (87 aa)) is the Acylphosphatase-like domain. Catalysis depends on residues Arg-27 and Asn-45.

Belongs to the acylphosphatase family.

It catalyses the reaction an acyl phosphate + H2O = a carboxylate + phosphate + H(+). The sequence is that of Acylphosphatase (acyP) from Mycolicibacterium smegmatis (strain ATCC 700084 / mc(2)155) (Mycobacterium smegmatis).